A 206-amino-acid polypeptide reads, in one-letter code: ATP phosphoribosyltransferase (206 aa).

It belongs to the ATP phosphoribosyltransferase family. Short subfamily. As to quaternary structure, heteromultimer composed of HisG and HisZ subunits.

The protein resides in the cytoplasm. The catalysed reaction is 1-(5-phospho-beta-D-ribosyl)-ATP + diphosphate = 5-phospho-alpha-D-ribose 1-diphosphate + ATP. It participates in amino-acid biosynthesis; L-histidine biosynthesis; L-histidine from 5-phospho-alpha-D-ribose 1-diphosphate: step 1/9. Its function is as follows. Catalyzes the condensation of ATP and 5-phosphoribose 1-diphosphate to form N'-(5'-phosphoribosyl)-ATP (PR-ATP). Has a crucial role in the pathway because the rate of histidine biosynthesis seems to be controlled primarily by regulation of HisG enzymatic activity. The chain is ATP phosphoribosyltransferase from Brachyspira hyodysenteriae (strain ATCC 49526 / WA1).